Consider the following 131-residue polypeptide: MTTSSYFLLVALGLLLYLCQSSFGTEHTCEPGASPHPQGKCGPELAEFHETMCEVEESLQGGTDDARKKRGRASLLRKRRGFLSMLKARAKRNEASPLPRAGRGIVCECCKNSCTYEEITEYCPPVTEGSG.

The signal sequence occupies residues 1-24 (MTTSSYFLLVALGLLLYLCQSSFG). Disulfide bonds link Cys29–Cys107, Cys41–Cys110, Cys53–Cys123, and Cys109–Cys114. The propeptide at 59 to 92 (LQGGTDDARKKRGRASLLRKRRGFLSMLKARAKR) is c peptide. The residue at position 118 (Glu118) is a 4-carboxyglutamate; partial. Ser130 is modified (serine amide).

It belongs to the insulin family. As to quaternary structure, heterodimer of A and B chains; disulfide-linked. In terms of tissue distribution, expressed by the venom gland.

The protein resides in the secreted. Its function is as follows. This venom insulin facilitates prey capture by rapidly inducing hypoglycemic shock. Intraperitoneal injection of this peptide into zebrafish lowers blood glucose with the same potency than human insulin. In vivo, when applied to water, this peptide reduces overall locomotor activity of zebrafish larvae, observed as a significant decrease in the percentage of time spent swimming and movement frequency. The polypeptide is Con-Ins Q1b (Conus quercinus (Oak cone)).